The chain runs to 75 residues: Small ribosomal subunit protein bS18 (75 aa).

The protein belongs to the bacterial ribosomal protein bS18 family. In terms of assembly, part of the 30S ribosomal subunit. Forms a tight heterodimer with protein bS6.

Functionally, binds as a heterodimer with protein bS6 to the central domain of the 16S rRNA, where it helps stabilize the platform of the 30S subunit. The chain is Small ribosomal subunit protein bS18 from Buchnera aphidicola subsp. Acyrthosiphon pisum (strain 5A).